The primary structure comprises 35 residues: Cytochrome b6-f complex subunit 5 (35 aa).

Residues 5-25 (LLTGIVLGSIFITLLGLLAAA) form a helical membrane-spanning segment.

This sequence belongs to the PetG family. The 4 large subunits of the cytochrome b6-f complex are cytochrome b6, subunit IV (17 kDa polypeptide, PetD), cytochrome f and the Rieske protein, while the 4 small subunits are PetG, PetL, PetM and PetN. The complex functions as a dimer.

The protein localises to the plastid. It localises to the chloroplast thylakoid membrane. Its function is as follows. Component of the cytochrome b6-f complex, which mediates electron transfer between photosystem II (PSII) and photosystem I (PSI), cyclic electron flow around PSI, and state transitions. PetG is required for either the stability or assembly of the cytochrome b6-f complex. The protein is Cytochrome b6-f complex subunit 5 of Cyanidium caldarium (Red alga).